A 660-amino-acid polypeptide reads, in one-letter code: uncharacterized protein (660 aa).

The tract at residues 1 to 660 (MGTPCQSARG…RNPGCPRTWR (660 aa)) is disordered. The span at 67-80 (RPGGGNRVGAGRGR) shows a compositional bias: gly residues. Residues 104-116 (SNPTGGCSDPQRS) show a composition bias toward polar residues. A run of 4 repeats spans residues 149-273 (SARN…GCPR), 274-398 (SARN…GCPR), 399-523 (SARN…GCPR), and 524-648 (SARN…GCPR). The segment at 149 to 648 (SARNPGCPRT…THRRPPGCPR (500 aa)) is 4 X 125 AA tandem repeats. 4 stretches are compositionally biased toward low complexity: residues 177–196 (RPSG…GTPA), 302–321 (RPSG…GTPA), 427–446 (RPSG…GTPA), and 552–571 (RPSG…GTPA).

This is an uncharacterized protein from Homo sapiens (Human).